Here is a 391-residue protein sequence, read N- to C-terminus: 3-ketoacyl-CoA thiolase (391 aa).

Cysteine 95 acts as the Acyl-thioester intermediate in catalysis. Active-site proton acceptor residues include histidine 347 and cysteine 377.

It belongs to the thiolase-like superfamily. Thiolase family. As to quaternary structure, heterotetramer of two alpha chains (FadB) and two beta chains (FadA).

It is found in the cytoplasm. It catalyses the reaction an acyl-CoA + acetyl-CoA = a 3-oxoacyl-CoA + CoA. It functions in the pathway lipid metabolism; fatty acid beta-oxidation. In terms of biological role, catalyzes the final step of fatty acid oxidation in which acetyl-CoA is released and the CoA ester of a fatty acid two carbons shorter is formed. In Saccharophagus degradans (strain 2-40 / ATCC 43961 / DSM 17024), this protein is 3-ketoacyl-CoA thiolase.